An 833-amino-acid polypeptide reads, in one-letter code: DNA polymerase I, thermostable (833 aa).

The region spanning 173 to 267 (VPPERWVDFR…FKALRRRTPD (95 aa)) is the 5'-3' exonuclease domain. Residues 412–833 (ERLFQNLFPR…GRDWLEAKQD (422 aa)) are polymerase.

It belongs to the DNA polymerase type-A family.

It carries out the reaction DNA(n) + a 2'-deoxyribonucleoside 5'-triphosphate = DNA(n+1) + diphosphate. Its function is as follows. In addition to polymerase activity, this DNA polymerase exhibits 5'-3' exonuclease activity. Unlikely to have 3'-5' exonuclease activity due to absence of a 3'-5' exonuclease domain. The protein is DNA polymerase I, thermostable (polA) of Thermus filiformis.